The following is a 273-amino-acid chain: DnaJ homolog subfamily C member 27 (273 aa).

Residues 1 to 18 (MEANMPKRKEPGRSLRIK) form a required for interaction with MAPK1 region. GTP contacts are provided by residues 23 to 30 (GNAEVGKS), 71 to 75 (DMAGH), and 134 to 137 (NKID). In terms of domain architecture, J spans 217-273 (DSWDMLGVKPGASRDEVNKAYRKLAVLLHPDKCVAPGSEDAFKAVVNARTALLKNIK).

This sequence belongs to the small GTPase superfamily. Rab family. In terms of assembly, interacts directly with MAPK1 (wild-type and kinase-deficient forms). Interacts directly (in GTP-bound form) with MAP2K1 (wild-type and kinase-deficient forms). Overexpressed in gastrointestinal cancers; expression correlates with later tumor-node-metastasis stages of colorectal cancers.

The protein resides in the nucleus. Functionally, GTPase which can activate the MEK/ERK pathway and induce cell transformation when overexpressed. May act as a nuclear scaffold for MAPK1, probably by association with MAPK1 nuclear export signal leading to enhanced ERK1/ERK2 signaling. The polypeptide is DnaJ homolog subfamily C member 27 (DNAJC27) (Homo sapiens (Human)).